The following is a 561-amino-acid chain: Arginine--tRNA ligase (561 aa).

The short motif at 128–138 is the 'HIGH' region element; it reads ANPTGPLHVGH.

It belongs to the class-I aminoacyl-tRNA synthetase family. In terms of assembly, monomer.

The protein resides in the cytoplasm. It catalyses the reaction tRNA(Arg) + L-arginine + ATP = L-arginyl-tRNA(Arg) + AMP + diphosphate. In Chromohalobacter salexigens (strain ATCC BAA-138 / DSM 3043 / CIP 106854 / NCIMB 13768 / 1H11), this protein is Arginine--tRNA ligase.